A 471-amino-acid polypeptide reads, in one-letter code: FAD-linked oxidoreductase sorD (471 aa).

The signal sequence occupies residues 1-23 (MQAASAFATCLLASVGGNSSAVA). N-linked (GlcNAc...) asparagine glycosylation is found at Asn18, Asn29, Asn174, Asn279, and Asn351. Residues 41–212 (LLTTPSAIVW…TDFSIRTEPV (172 aa)) enclose the FAD-binding PCMH-type domain.

It belongs to the oxygen-dependent FAD-linked oxidoreductase family. FAD serves as cofactor.

Its pathway is secondary metabolite biosynthesis. Its function is as follows. FAD-linked oxidoreductase; part of the gene cluster that mediates the biosynthesis of sorbicillinoids, a diverse group of yellow secondary metabolites that restrict growth of competing pathogenic fungi but not of bacteria. Sorbicillinoids biosynthesis requires the action of two PKSs. SorA iteratively combines three acetyl units and the growing chain is modified by the ketoacyl reductase subunit, and optional by the enoyl reductase subunit in the second cycle. The polyketide is then handed over to the PKS SorB, which adds three more acetyl units, and two methyl groups. SorB releases an aldehyde, which undergoes spontaneous cyclization resulting in the formation of sorbicillin or 2',3'-dihydrosorbicillin. The monooxygenase sorC oxidizes sorbicillin and 2',3'-dihydrosorbicillin to 2',3'-dihydrosorbicillinol and sorbicillinol, respectively. The oxidoreductase sorD further converts sorbicillinol into oxosorbicillinol. Sorbicillinol is the building block for the other sorbicillinoids such as disorbicillinol, bisvertinolon, and dihydrobisvertinolone. This Penicillium rubens (strain ATCC 28089 / DSM 1075 / NRRL 1951 / Wisconsin 54-1255) (Penicillium chrysogenum) protein is FAD-linked oxidoreductase sorD.